The chain runs to 330 residues: Zinc finger protein sdz-12 (330 aa).

C2H2-type zinc fingers lie at residues 27-48 (PQCQ…HMKH), 63-85 (FRCE…QITH), 91-113 (KKCS…LHNH), 120-144 (FDCP…LVNH), and 153-176 (APCG…HFDH). Over residues 183-195 (SAPAPTSSARLSP) the composition is skewed to low complexity. A disordered region spans residues 183 to 203 (SAPAPTSSARLSPITVSTSGS). The segment at 271–293 (FECKHCTIKFHDATMSIMHNALH) adopts a C2H2-type 6 zinc-finger fold.

The protein belongs to the krueppel C2H2-type zinc-finger protein family. Expressed in the somatic gonad.

In terms of biological role, together with ehn-3, may play a role in gonadogenesis. The chain is Zinc finger protein sdz-12 from Caenorhabditis elegans.